Consider the following 186-residue polypeptide: Peptidyl-tRNA hydrolase (186 aa).

Tyrosine 14 lines the tRNA pocket. The active-site Proton acceptor is histidine 19. 3 residues coordinate tRNA: phenylalanine 64, asparagine 66, and asparagine 112.

It belongs to the PTH family. Monomer.

The protein localises to the cytoplasm. The enzyme catalyses an N-acyl-L-alpha-aminoacyl-tRNA + H2O = an N-acyl-L-amino acid + a tRNA + H(+). Functionally, hydrolyzes ribosome-free peptidyl-tRNAs (with 1 or more amino acids incorporated), which drop off the ribosome during protein synthesis, or as a result of ribosome stalling. Its function is as follows. Catalyzes the release of premature peptidyl moieties from peptidyl-tRNA molecules trapped in stalled 50S ribosomal subunits, and thus maintains levels of free tRNAs and 50S ribosomes. The chain is Peptidyl-tRNA hydrolase from Mycoplasma mycoides subsp. mycoides SC (strain CCUG 32753 / NCTC 10114 / PG1).